The following is a 379-amino-acid chain: V-type proton ATPase subunit S1 (379 aa).

The N-terminal stretch at 1–17 (MLWKSLIALCVIGAAVA) is a signal peptide. Residues 18–333 (EQTPVFLWGA…WDCVGFVTPG (316 aa)) are Lumenal-facing. N-linked (GlcNAc...) asparagine glycans are attached at residues Asn225 and Asn284. A disulfide bridge links Cys282 with Cys326. Residues 334 to 354 (ILMGLFVVALLLVIMFVGVCW) form a helical membrane-spanning segment. Residues 355–379 (MMDINTMDRFDDPKGKTITINAAAE) lie on the Cytoplasmic side of the membrane.

The protein belongs to the vacuolar ATPase subunit S1 family. Accessory component of the multisubunit proton-transporting vacuolar (V)-ATPase protein pump. May interact with ATP6AP2.

It localises to the endoplasmic reticulum membrane. In terms of biological role, accessory subunit of the proton-transporting vacuolar (V)-ATPase protein pump, which is required for luminal acidification of secretory vesicles. In Drosophila melanogaster (Fruit fly), this protein is V-type proton ATPase subunit S1.